The following is a 145-amino-acid chain: UPF0179 protein TV1250 (145 aa).

It belongs to the UPF0179 family.

This chain is UPF0179 protein TV1250, found in Thermoplasma volcanium (strain ATCC 51530 / DSM 4299 / JCM 9571 / NBRC 15438 / GSS1).